Reading from the N-terminus, the 264-residue chain is 3-methyl-2-oxobutanoate hydroxymethyltransferase (264 aa).

Mg(2+) is bound by residues aspartate 45 and aspartate 84. 3-methyl-2-oxobutanoate is bound by residues 45–46 (DS), aspartate 84, and lysine 112. Glutamate 114 provides a ligand contact to Mg(2+). Catalysis depends on glutamate 181, which acts as the Proton acceptor.

It belongs to the PanB family. In terms of assembly, homodecamer; pentamer of dimers. Requires Mg(2+) as cofactor.

The protein resides in the cytoplasm. The enzyme catalyses 3-methyl-2-oxobutanoate + (6R)-5,10-methylene-5,6,7,8-tetrahydrofolate + H2O = 2-dehydropantoate + (6S)-5,6,7,8-tetrahydrofolate. It functions in the pathway cofactor biosynthesis; (R)-pantothenate biosynthesis; (R)-pantoate from 3-methyl-2-oxobutanoate: step 1/2. In terms of biological role, catalyzes the reversible reaction in which hydroxymethyl group from 5,10-methylenetetrahydrofolate is transferred onto alpha-ketoisovalerate to form ketopantoate. This chain is 3-methyl-2-oxobutanoate hydroxymethyltransferase, found in Escherichia fergusonii (strain ATCC 35469 / DSM 13698 / CCUG 18766 / IAM 14443 / JCM 21226 / LMG 7866 / NBRC 102419 / NCTC 12128 / CDC 0568-73).